A 161-amino-acid chain; its full sequence is Large ribosomal subunit protein uL15 (161 aa).

Positions 1-43 are disordered; sequence MKLSDIADNAGSRKKRMRIGRGIGSGKGKTGGRGGKGQTARSG. Positions 21-37 are enriched in gly residues; that stretch reads RGIGSGKGKTGGRGGKG.

Belongs to the universal ribosomal protein uL15 family. Part of the 50S ribosomal subunit.

Binds to the 23S rRNA. This Nitrobacter hamburgensis (strain DSM 10229 / NCIMB 13809 / X14) protein is Large ribosomal subunit protein uL15.